A 63-amino-acid chain; its full sequence is Large ribosomal subunit protein uL29 (63 aa).

This sequence belongs to the universal ribosomal protein uL29 family.

The polypeptide is Large ribosomal subunit protein uL29 (Vibrio parahaemolyticus serotype O3:K6 (strain RIMD 2210633)).